The following is an 80-amino-acid chain: Exodeoxyribonuclease 7 small subunit (80 aa).

The protein belongs to the XseB family. As to quaternary structure, heterooligomer composed of large and small subunits.

The protein localises to the cytoplasm. The enzyme catalyses Exonucleolytic cleavage in either 5'- to 3'- or 3'- to 5'-direction to yield nucleoside 5'-phosphates.. Functionally, bidirectionally degrades single-stranded DNA into large acid-insoluble oligonucleotides, which are then degraded further into small acid-soluble oligonucleotides. The chain is Exodeoxyribonuclease 7 small subunit from Escherichia coli (strain SE11).